Reading from the N-terminus, the 433-residue chain is G-protein coupled receptor 22 (433 aa).

Residues 1-45 (MCFSPILEINMQSESNITVRDDIDDINTNMYQPLSYPLSFQVSLT) are Extracellular-facing. A glycan (N-linked (GlcNAc...) asparagine) is linked at N16. The chain crosses the membrane as a helical span at residues 46-66 (GFLMLEIVLGLGSNLTVLVLY). The Cytoplasmic portion of the chain corresponds to 67–85 (CMKSNLINSVSNIITMNLH). Residues 86–106 (VLDVIICVGCIPLTIVILLLS) traverse the membrane as a helical segment. Residues 107–115 (LESNTALIC) are Extracellular-facing. A helical transmembrane segment spans residues 116–136 (CFHEACVSFASVSTAINVFAI). Residues 137 to 156 (TLDRYDISVKPANRILTMGR) are Cytoplasmic-facing. Residues 157-177 (AVMLMISIWIFSFFSFLIPFI) form a helical membrane-spanning segment. Topologically, residues 178-208 (EVNFFSLQSGNTWENKTLLCVSTNEYYTELG) are extracellular. A glycan (N-linked (GlcNAc...) asparagine) is linked at N192. Residues 209–229 (MYYHLLVQIPIFFFTVVVMLI) form a helical membrane-spanning segment. The Cytoplasmic segment spans residues 230–315 (TYTKILQALN…ERQKRVFRMS (86 aa)). A helical transmembrane segment spans residues 316 to 336 (LLIISTFLLCWTPISVLNTTI). Residues 337–349 (LCLGPSDLLVKLR) lie on the Extracellular side of the membrane. The chain crosses the membrane as a helical span at residues 350-370 (LCFLVMAYGTTIFHPLLYAFT). At 371–433 (RQKFQKVLKS…KCLVPQVVTD (63 aa)) the chain is on the cytoplasmic side.

It belongs to the G-protein coupled receptor 1 family. High expression in adult and fetal heart tissue. Expressed in the brain, with enrichment in the accumbens, amygdala, cerebellum, cortex, and hippocampus regions.

It is found in the cell membrane. Functionally, orphan G-protein coupled receptor. Seems to act through a G(i)/G(o) mediated pathway. May be involved in ciliogenesis. The protein is G-protein coupled receptor 22 of Homo sapiens (Human).